The chain runs to 220 residues: Ribonuclease HII (220 aa).

The region spanning 32–220 is the RNase H type-2 domain; the sequence is KHIAGIDEAG…FAPIKGRFDC (189 aa). A divalent metal cation contacts are provided by D38, E39, and D130.

It belongs to the RNase HII family. Mn(2+) is required as a cofactor. Mg(2+) serves as cofactor.

It localises to the cytoplasm. The catalysed reaction is Endonucleolytic cleavage to 5'-phosphomonoester.. Endonuclease that specifically degrades the RNA of RNA-DNA hybrids. The sequence is that of Ribonuclease HII from Brucella suis (strain ATCC 23445 / NCTC 10510).